The following is a 185-amino-acid chain: Prenylated Rab acceptor protein 1 (185 aa).

Topologically, residues 1-78 are cytoplasmic; sequence MAVEKDQQKD…RNVEYYQSNY (78 aa). The interval 30-54 is required for interaction with prenylated RAB3A and VAMP2; it reads AGREWLERRRATIRSWGSFVDQRRF. 2 consecutive transmembrane segments (helical) span residues 79–94 and 95–112; these read VFVF…ATSP and MLLV…ILYL. Residues 113-131 lie on the Cytoplasmic side of the membrane; the sequence is RTLQSKFVLFGREVSPAHQ. A run of 2 helical transmembrane segments spans residues 132-148 and 149-165; these read YALA…LAGA and GSAV…VIGS. The tract at residues 165-185 is required for interaction with GDI1; it reads SHAAFHQIEAVDGEELQMEPV. Residues 166–185 are Cytoplasmic-facing; that stretch reads HAAFHQIEAVDGEELQMEPV. A required for interaction with prenylated RAB3A and VAMP2 region spans residues 175–185; the sequence is VDGEELQMEPV. The tract at residues 175 to 185 is homodimerization; it reads VDGEELQMEPV.

The protein belongs to the PRA1 family. In terms of assembly, homodimer. Interacts with VAMP2 (synaptobrevin-2), prenylated Rab proteins, GDI1, NDRG1 and PCLO.

The protein resides in the cell membrane. Its subcellular location is the cytoplasm. It localises to the golgi apparatus. The protein localises to the cytoplasmic vesicle. It is found in the secretory vesicle. The protein resides in the synaptic vesicle. In terms of biological role, general Rab protein regulator required for vesicle formation from the Golgi complex. May control vesicle docking and fusion by mediating the action of Rab GTPases to the SNARE complexes. In addition it inhibits the removal of Rab GTPases from the membrane by GDI1. The sequence is that of Prenylated Rab acceptor protein 1 (RABAC1) from Bos taurus (Bovine).